Reading from the N-terminus, the 87-residue chain is Small ribosomal subunit protein bS16 (87 aa).

This sequence belongs to the bacterial ribosomal protein bS16 family.

The polypeptide is Small ribosomal subunit protein bS16 (Nitrosospira multiformis (strain ATCC 25196 / NCIMB 11849 / C 71)).